A 434-amino-acid chain; its full sequence is Probable glycine dehydrogenase (decarboxylating) subunit 1 (434 aa).

The protein belongs to the GcvP family. N-terminal subunit subfamily. As to quaternary structure, the glycine cleavage system is composed of four proteins: P, T, L and H. In this organism, the P 'protein' is a heterodimer of two subunits.

The enzyme catalyses N(6)-[(R)-lipoyl]-L-lysyl-[glycine-cleavage complex H protein] + glycine + H(+) = N(6)-[(R)-S(8)-aminomethyldihydrolipoyl]-L-lysyl-[glycine-cleavage complex H protein] + CO2. The glycine cleavage system catalyzes the degradation of glycine. The P protein binds the alpha-amino group of glycine through its pyridoxal phosphate cofactor; CO(2) is released and the remaining methylamine moiety is then transferred to the lipoamide cofactor of the H protein. This is Probable glycine dehydrogenase (decarboxylating) subunit 1 from Thermoplasma volcanium (strain ATCC 51530 / DSM 4299 / JCM 9571 / NBRC 15438 / GSS1).